The primary structure comprises 212 residues: RNA chaperone ProQ (212 aa).

Residues 107 to 153 (QDKAKAKRVAQAKSANPAAKTAKKPVKKPVAKRPKPAQSSKPAKEPV) form a disordered region. The span at 117–126 (QAKSANPAAK) shows a compositional bias: low complexity. A compositionally biased stretch (basic residues) spans 127 to 141 (TAKKPVKKPVAKRPK).

This sequence belongs to the ProQ family.

Its subcellular location is the cytoplasm. In terms of biological role, RNA chaperone with significant RNA binding, RNA strand exchange and RNA duplexing activities. The polypeptide is RNA chaperone ProQ (Shewanella pealeana (strain ATCC 700345 / ANG-SQ1)).